Consider the following 124-residue polypeptide: Ribonuclease P protein component (124 aa).

Belongs to the RnpA family. In terms of assembly, consists of a catalytic RNA component (M1 or rnpB) and a protein subunit.

The enzyme catalyses Endonucleolytic cleavage of RNA, removing 5'-extranucleotides from tRNA precursor.. In terms of biological role, RNaseP catalyzes the removal of the 5'-leader sequence from pre-tRNA to produce the mature 5'-terminus. It can also cleave other RNA substrates such as 4.5S RNA. The protein component plays an auxiliary but essential role in vivo by binding to the 5'-leader sequence and broadening the substrate specificity of the ribozyme. The sequence is that of Ribonuclease P protein component from Maridesulfovibrio salexigens (strain ATCC 14822 / DSM 2638 / NCIMB 8403 / VKM B-1763) (Desulfovibrio salexigens).